A 330-amino-acid chain; its full sequence is Putative protein N-methyltransferase FAM86B2 (330 aa).

Residue Met1 is modified to N-acetylmethionine. S-adenosyl-L-methionine contacts are provided by residues Trp139, 165-167 (GSG), Trp228, and Ala247.

The protein belongs to the class I-like SAM-binding methyltransferase superfamily. EEF2KMT family. Interacts with EEF2KMT.

The protein is Putative protein N-methyltransferase FAM86B2 (FAM86B2) of Homo sapiens (Human).